The sequence spans 414 residues: Putative transporter AmpG 4 (414 aa).

12 helical membrane-spanning segments follow: residues 15–35 (IFIL…TLAV), 44–63 (IAVI…KVFW), 84–104 (WLIL…KENP), 109–129 (TSFY…DIAV), 150–170 (VFGY…LAEI), 177–197 (LTFC…ITVN), 230–250 (FAVT…MLGA), 268–288 (IIAK…GGIV), 295–315 (FKGL…FIWL), 324–344 (ALLI…TALV), 360–379 (YALL…IYAG), and 389–409 (GFFL…MYLN).

Belongs to the major facilitator superfamily.

The protein resides in the cell inner membrane. In Rickettsia conorii (strain ATCC VR-613 / Malish 7), this protein is Putative transporter AmpG 4 (ampG4).